Consider the following 455-residue polypeptide: Chromosomal replication initiator protein DnaA (455 aa).

The domain I, interacts with DnaA modulators stretch occupies residues 1-74 (MFNFEKFWQH…IQSAYGYAGV (74 aa)). The interval 74–117 (VELLPVFQISEDSDTPERIVTPEPQHNLQTTPTRAPQREFAKDL) is domain II. Residues 118–334 (KLNEKYTFDN…GALVKVQAYA (217 aa)) form a domain III, AAA+ region region. ATP contacts are provided by glycine 162, glycine 164, lysine 165, and threonine 166. The segment at 335–455 (TIEKADIDIN…VFDLKQMLEH (121 aa)) is domain IV, binds dsDNA.

The protein belongs to the DnaA family. Oligomerizes as a right-handed, spiral filament on DNA at oriC.

It is found in the cytoplasm. Plays an essential role in the initiation and regulation of chromosomal replication. ATP-DnaA binds to the origin of replication (oriC) to initiate formation of the DNA replication initiation complex once per cell cycle. Binds the DnaA box (a 9 base pair repeat at the origin) and separates the double-stranded (ds)DNA. Forms a right-handed helical filament on oriC DNA; dsDNA binds to the exterior of the filament while single-stranded (ss)DNA is stabiized in the filament's interior. The ATP-DnaA-oriC complex binds and stabilizes one strand of the AT-rich DNA unwinding element (DUE), permitting loading of DNA polymerase. After initiation quickly degrades to an ADP-DnaA complex that is not apt for DNA replication. Binds acidic phospholipids. This chain is Chromosomal replication initiator protein DnaA, found in Lactobacillus acidophilus (strain ATCC 700396 / NCK56 / N2 / NCFM).